Reading from the N-terminus, the 162-residue chain is Ribosome maturation factor RimP (162 aa).

Belongs to the RimP family.

The protein resides in the cytoplasm. Required for maturation of 30S ribosomal subunits. In Leptospira biflexa serovar Patoc (strain Patoc 1 / Ames), this protein is Ribosome maturation factor RimP.